The chain runs to 234 residues: Small ribosomal subunit protein uS2 (234 aa).

Belongs to the universal ribosomal protein uS2 family.

This is Small ribosomal subunit protein uS2 from Prochlorococcus marinus (strain MIT 9515).